A 224-amino-acid polypeptide reads, in one-letter code: Urease accessory protein UreF (224 aa).

This sequence belongs to the UreF family. As to quaternary structure, ureD, UreF and UreG form a complex that acts as a GTP-hydrolysis-dependent molecular chaperone, activating the urease apoprotein by helping to assemble the nickel containing metallocenter of UreC. The UreE protein probably delivers the nickel.

Its subcellular location is the cytoplasm. Required for maturation of urease via the functional incorporation of the urease nickel metallocenter. The polypeptide is Urease accessory protein UreF (Pseudomonas savastanoi pv. phaseolicola (strain 1448A / Race 6) (Pseudomonas syringae pv. phaseolicola (strain 1448A / Race 6))).